The chain runs to 260 residues: Serine/threonine-protein acetyltransferase NGR_a02610 (260 aa).

Residues H123 and E143 contribute to the active site. H123 contributes to the CoA binding site. 180–181 (KS) is a CoA binding site. Residue C185 is part of the active site.

The protein belongs to the acetyltransferase YopJ family.

It catalyses the reaction L-threonyl-[protein] + acetyl-CoA = O-acetyl-L-threonyl-[protein] + CoA. The catalysed reaction is L-seryl-[protein] + acetyl-CoA = O-acetyl-L-seryl-[protein] + CoA. Serine/threonine-protein acetyltransferase translocated into infected cells, which mediates acetylation of serine and threonine residues of host target proteins. This Sinorhizobium fredii (strain NBRC 101917 / NGR234) protein is Serine/threonine-protein acetyltransferase NGR_a02610.